The primary structure comprises 360 residues: DNA replication and repair protein RecF (360 aa).

30–37 (GQNGSGKT) provides a ligand contact to ATP.

Belongs to the RecF family.

It localises to the cytoplasm. Functionally, the RecF protein is involved in DNA metabolism; it is required for DNA replication and normal SOS inducibility. RecF binds preferentially to single-stranded, linear DNA. It also seems to bind ATP. This is DNA replication and repair protein RecF from Shewanella loihica (strain ATCC BAA-1088 / PV-4).